A 494-amino-acid chain; its full sequence is MFQVQKELASHEAVVVALFEEEKTSSFVQELDKAFEGQLQVLLEEKELSTKKKAISKVHSLGKTDVKRYYFVGLGKKESYTTETLRSALGKTFKTLQAAKVQDAAILLDSFVTEKLDAIDVAHIAAEVQGLGTYELQTYKSDKKDRVKLEKFTAITAEDAQEIEAALTVGYVHGRATNSARTLVNMPPNVLTATKLAEYAVELAEKYDMDYKVLEKEEMEELGMGALLAVNQGSVEPPKMIALIYKGKEEWTDVIGFVGKGITYDTGGYSLKPREGMVGMKGDMGGAAAVLGAMEIIGELRPEQNVIAVIPSTDNVVSGTAFKPDDVITSMSGKTIEVLNTDAEGRLALADGITYAKKLGANYLIDVATLTGGVIVALGNHTTGAMTNNEELFEQVLEASMETDESIWQLPIFDRDKERVRNSKFADLNNSPGREGHAVMAGTFIGEFAEDTPWVHLDIAGTSESSGAHDLGPAGATGAMVRTLATLVERFGEE.

Mn(2+) contacts are provided by Lys-260 and Asp-265. Lys-272 is an active-site residue. The Mn(2+) site is built by Asp-283, Asp-342, and Glu-344. Residue Arg-346 is part of the active site.

It belongs to the peptidase M17 family. Mn(2+) serves as cofactor.

It localises to the cytoplasm. The catalysed reaction is Release of an N-terminal amino acid, Xaa-|-Yaa-, in which Xaa is preferably Leu, but may be other amino acids including Pro although not Arg or Lys, and Yaa may be Pro. Amino acid amides and methyl esters are also readily hydrolyzed, but rates on arylamides are exceedingly low.. It carries out the reaction Release of an N-terminal amino acid, preferentially leucine, but not glutamic or aspartic acids.. Its function is as follows. Presumably involved in the processing and regular turnover of intracellular proteins. Catalyzes the removal of unsubstituted N-terminal amino acids from various peptides. The protein is Probable cytosol aminopeptidase of Bacillus thuringiensis (strain Al Hakam).